The sequence spans 479 residues: Ribosomal RNA small subunit methyltransferase F (479 aa).

Residues 125–131, glutamate 149, aspartate 176, and aspartate 194 contribute to the S-adenosyl-L-methionine site; that span reads AAAPGSK. Residue cysteine 247 is the Nucleophile of the active site.

It belongs to the class I-like SAM-binding methyltransferase superfamily. RsmB/NOP family.

The protein localises to the cytoplasm. It carries out the reaction cytidine(1407) in 16S rRNA + S-adenosyl-L-methionine = 5-methylcytidine(1407) in 16S rRNA + S-adenosyl-L-homocysteine + H(+). Specifically methylates the cytosine at position 1407 (m5C1407) of 16S rRNA. The polypeptide is Ribosomal RNA small subunit methyltransferase F (Escherichia coli O81 (strain ED1a)).